The sequence spans 187 residues: Elongation factor P (187 aa).

This sequence belongs to the elongation factor P family.

The protein resides in the cytoplasm. It participates in protein biosynthesis; polypeptide chain elongation. Involved in peptide bond synthesis. Stimulates efficient translation and peptide-bond synthesis on native or reconstituted 70S ribosomes in vitro. Probably functions indirectly by altering the affinity of the ribosome for aminoacyl-tRNA, thus increasing their reactivity as acceptors for peptidyl transferase. This Azobacteroides pseudotrichonymphae genomovar. CFP2 protein is Elongation factor P.